Here is a 3530-residue protein sequence, read N- to C-terminus: Unconventional myosin-XV (3530 aa).

Disordered stretches follow at residues 1 to 46, 615 to 710, and 730 to 1057; these read MAKE…RTPK, AGMD…PAHV, and EVPP…QKTL. Residues 663 to 681 are compositionally biased toward pro residues; sequence PPVPPRPPSSGPPPAPPLS. Low complexity-rich tracts occupy residues 682 to 693, 753 to 763, and 823 to 835; these read PALSGLPRPASP, AAFGFPGASPR, and SPAP…RLGP. Over residues 836 to 850 the composition is skewed to pro residues; sequence PGSPLPGSPRPPSPP. Over residues 859 to 869 the composition is skewed to low complexity; sequence RSSLNLPSRLP. The segment covering 903–913 has biased composition (basic and acidic residues); it reads PLEHRESPREP. Pro residues predominate over residues 1027–1038; sequence TKPPTPAPPKDV. In terms of domain architecture, Myosin motor spans 1222 to 1899; sequence DGVEDMTQLE…LYQLLESMRE (678 aa). Position 1315–1322 (1315–1322) interacts with ATP; it reads GESGSGKT. A coiled-coil region spans residues 1323–1350; the sequence is EATKLILRYLAAMNQKREVMQQIKILEA. An actin-binding region spans residues 1792-1799; the sequence is FMRCLKPN. The tract at residues 1888–2029 is neck or regulatory domain; that stretch reads EHLYQLLESM…AQVPQVAPVR (142 aa). 3 IQ domains span residues 1902 to 1924, 1925 to 1954, and 1955 to 1976; these read LNLA…RFRS, LRHK…SLVK, and FRSL…AEWR. Residues 2030–3530 are tail; sequence TPRLQAEPRV…TLPPSEITLL (1501 aa). The MyTH4 1 domain occupies 2065 to 2217; that stretch reads MLTVPLRTPL…PTQLEWTATY (153 aa). Disordered regions lie at residues 2311 to 2381, 2414 to 2446, 2490 to 2509, and 2644 to 2665; these read AASR…GEPA, YRMK…IPGL, AEKP…GPPA, and TSAP…LEPP. A compositionally biased stretch (polar residues) spans 2349-2371; it reads GYSSHNQDGTNGETEAQRGTATH. Positions 2417–2427 are enriched in gly residues; that stretch reads KGGGQPGGGSS. One can recognise an SH3 domain in the interval 2867–2953; the sequence is KDSDYVVAVR…PSELVQPAAA (87 aa). One can recognise a MyTH4 2 domain in the interval 3050–3204; that stretch reads FTKTPLQESL…PSSIELRAML (155 aa). The 322-residue stretch at 3209–3530 folds into the FERM domain; sequence SKRQLFLLPG…TLPPSEITLL (322 aa).

This sequence belongs to the TRAFAC class myosin-kinesin ATPase superfamily. Myosin family. In terms of assembly, interacts with the third PDZ domain of WHRN which is necessary for localization of WHRN to stereocilium tips. Interacts with EPS8. Interacts with FASLG. Highly expressed in pituitary. Also expressed at lower levels in adult brain, kidney, liver, lung, pancreas, placenta and skeletal muscle. Not expressed in brain. In the pituitary, highly expressed in anterior gland cells.

It is found in the cell projection. It localises to the stereocilium. Its subcellular location is the cytoplasm. The protein localises to the cytoskeleton. Its function is as follows. Myosins are actin-based motor molecules with ATPase activity. Unconventional myosins serve in intracellular movements. Their highly divergent tails are presumed to bind to membranous compartments, which would be moved relative to actin filaments. Required for the arrangement of stereocilia in mature hair bundles. The polypeptide is Unconventional myosin-XV (MYO15A) (Homo sapiens (Human)).